Consider the following 153-residue polypeptide: Myoglobin (153 aa).

A Globin domain is found at 1-147 (MATACVKSLE…FSDECLDHLK (147 aa)). Histidine 94 serves as a coordination point for heme b.

This sequence belongs to the globin family. In terms of assembly, homodimer; disulfide-linked. The N-terminus is blocked. Body wall globin is localized in cellular compartments belonging to the hypodermis, the dorsal, ventral and lateral cords, the nerve ring, and body wall muscle.

It localises to the cytoplasm. Functionally, high oxygen affinity. Probably supplies oxygen needed for muscle activity. This chain is Myoglobin, found in Ascaris suum (Pig roundworm).